The chain runs to 417 residues: Proteasome-activating nucleotidase (417 aa).

Residues 24-78 (SKYLLDRVKQLEERNVRLKEEYRKIELEKKSVENKKVQYEREIRKLTSELDRLKT) adopt a coiled-coil conformation. Residues 203 to 208 (GTGKTL) and H342 contribute to the ATP site. A docks into pockets in the proteasome alpha-ring to cause gate opening region spans residues 415-417 (MFA).

The protein belongs to the AAA ATPase family. In terms of assembly, homohexamer. The hexameric complex has a two-ring architecture resembling a top hat that caps the 20S proteasome core at one or both ends. Upon ATP-binding, the C-terminus of PAN interacts with the alpha-rings of the proteasome core by binding to the intersubunit pockets.

Its subcellular location is the cytoplasm. ATPase which is responsible for recognizing, binding, unfolding and translocation of substrate proteins into the archaeal 20S proteasome core particle. Is essential for opening the gate of the 20S proteasome via an interaction with its C-terminus, thereby allowing substrate entry and access to the site of proteolysis. Thus, the C-termini of the proteasomal ATPase function like a 'key in a lock' to induce gate opening and therefore regulate proteolysis. Unfolding activity requires energy from ATP hydrolysis, whereas ATP binding alone promotes ATPase-20S proteasome association which triggers gate opening, and supports translocation of unfolded substrates. The polypeptide is Proteasome-activating nucleotidase (Methanocella arvoryzae (strain DSM 22066 / NBRC 105507 / MRE50)).